A 165-amino-acid polypeptide reads, in one-letter code: Destrin (165 aa).

Position 2 is an N-acetylalanine (alanine 2). Serine 3 carries the phosphoserine modification. The 150-residue stretch at 4–153 (GVQVADEVCR…NRTSIAEKLG (150 aa)) folds into the ADF-H domain. An N6-acetyllysine modification is found at lysine 19. The short motif at 30 to 34 (KKRKK) is the Nuclear localization signal element.

It belongs to the actin-binding proteins ADF family. Post-translationally, ISGylated.

Functionally, actin-depolymerizing protein. Severs actin filaments (F-actin) and binds to actin monomers (G-actin). Acts in a pH-independent manner. This chain is Destrin (Dstn), found in Rattus norvegicus (Rat).